A 217-amino-acid chain; its full sequence is Cytidylate kinase (217 aa).

9–17 (GPSSSGKSS) lines the ATP pocket.

This sequence belongs to the cytidylate kinase family. Type 1 subfamily.

Its subcellular location is the cytoplasm. The catalysed reaction is CMP + ATP = CDP + ADP. It carries out the reaction dCMP + ATP = dCDP + ADP. The protein is Cytidylate kinase of Mycoplasma genitalium (strain ATCC 33530 / DSM 19775 / NCTC 10195 / G37) (Mycoplasmoides genitalium).